Consider the following 184-residue polypeptide: Rubrerythrin-2 (184 aa).

A Ferritin-like diiron domain is found at 2–146; the sequence is SVKNAMTADF…DAQDSAKENK (145 aa). The Fe(3+) site is built by glutamate 19, glutamate 52, glutamate 94, glutamate 97, glutamate 128, histidine 131, cysteine 156, cysteine 159, cysteine 171, and cysteine 174. The region spanning 151–184 is the Rubredoxin-like domain; that stretch reads GKVYICPVCGFTTLDENIEQCPICGVKKDKFQAF.

It depends on Fe(3+) as a cofactor.

It catalyses the reaction H2O2 + NADH + H(+) = NAD(+) + 2 H2O. Rubredoxin (Rd) increases the NADH consumption rate by serving as an intermediary electron-transfer shuttle between NROR and Rbr2. Functions as the terminal component of an NADH peroxidase (NADH:H(2)O(2) oxidoreductase) when using NADH:rubredoxin oxidoreductase (NROR) as the electron transport intermediary from NADH to Rbr2. This chain is Rubrerythrin-2 (rbr2), found in Clostridium acetobutylicum (strain ATCC 824 / DSM 792 / JCM 1419 / IAM 19013 / LMG 5710 / NBRC 13948 / NRRL B-527 / VKM B-1787 / 2291 / W).